A 209-amino-acid chain; its full sequence is VYMSGXGKPPDVTGGEAHVAGKTVTYTXNPGYIMIGGAXLTYETGSLGGLPDIDDGKSFYGLLGKVPNRVGNSVTYSSQHGYYLLGKKTLTRLNHVGLPGGKPSALDNGMATIVXRXAIYKGNHGFYLVLPAGYPGTPGTPGPRGGPGDPGMPGEPGVGFPGVPGFPGSNGRNGMNGGYPGPKGEDGDIGPMGGKGEPGDPGLPGEYGV.

The segment at valine 1 to valine 129 is nonhelical region. The triple-helical region stretch occupies residues leucine 130–valine 209. The tract at residues proline 138–valine 209 is disordered. Positions glycine 142–glycine 162 are enriched in gly residues.

Functionally, major component of the egg case wall which is secreted by the oviduct. The egg case combines mechanical strength and toughness with high permeability to small molecules and ions. This chain is Egg case collagen, found in Scyliorhinus canicula (Small-spotted catshark).